Here is a 363-residue protein sequence, read N- to C-terminus: Caffeic acid 3-O-methyltransferase (363 aa).

Residue 130–136 (MNQDKVL) coordinates substrate. Positions 162–180 (AFEYHGKDPRFNKVFNQGM) are substrate binding. S-adenosyl-L-methionine-binding residues include Gly208, Asp231, Asp251, Met252, and Lys265. His269 functions as the Proton acceptor in the catalytic mechanism.

The protein belongs to the class I-like SAM-binding methyltransferase superfamily. Cation-independent O-methyltransferase family. COMT subfamily. Homodimer.

The catalysed reaction is (E)-caffeate + S-adenosyl-L-methionine = (E)-ferulate + S-adenosyl-L-homocysteine + H(+). Its pathway is aromatic compound metabolism; phenylpropanoid biosynthesis. In terms of biological role, catalyzes the conversion of caffeic acid to ferulic acid and of 5-hydroxyferulic acid to sinapic acid. The resulting products may subsequently be converted to the corresponding alcohols that are incorporated into lignins. The polypeptide is Caffeic acid 3-O-methyltransferase (COMT1) (Catharanthus roseus (Madagascar periwinkle)).